Reading from the N-terminus, the 190-residue chain is UPF0301 protein Pden_0436 (190 aa).

Belongs to the UPF0301 (AlgH) family.

This Paracoccus denitrificans (strain Pd 1222) protein is UPF0301 protein Pden_0436.